The chain runs to 281 residues: Diaminopimelate epimerase (281 aa).

Substrate-binding residues include N13, Q46, and N66. The Proton donor role is filled by C75. Substrate-binding positions include 76 to 77, N160, N193, and 211 to 212; these read GN and ER. The Proton acceptor role is filled by C220. Substrate is bound at residue 221-222; it reads GT.

It belongs to the diaminopimelate epimerase family. In terms of assembly, homodimer.

It localises to the cytoplasm. The enzyme catalyses (2S,6S)-2,6-diaminopimelate = meso-2,6-diaminopimelate. Its pathway is amino-acid biosynthesis; L-lysine biosynthesis via DAP pathway; DL-2,6-diaminopimelate from LL-2,6-diaminopimelate: step 1/1. Catalyzes the stereoinversion of LL-2,6-diaminopimelate (L,L-DAP) to meso-diaminopimelate (meso-DAP), a precursor of L-lysine and an essential component of the bacterial peptidoglycan. In Acinetobacter baylyi (strain ATCC 33305 / BD413 / ADP1), this protein is Diaminopimelate epimerase.